The following is a 697-amino-acid chain: Potassium-transporting ATPase ATP-binding subunit (697 aa).

A run of 4 helical transmembrane segments spans residues 36–56 (VMFV…RDLI), 66–86 (LQII…EAVA), 218–238 (IALN…TATI), and 253–273 (VLVA…LSAI). Aspartate 306 (4-aspartylphosphate intermediate) is an active-site residue. ATP-binding positions include aspartate 343, glutamate 347, 376–383 (FTAQTRMS), and lysine 394. Mg(2+)-binding residues include aspartate 526 and aspartate 530. Transmembrane regions (helical) follow at residues 595–615 (YFAI…QSTG), 631–651 (AILS…PLSL), and 669–689 (LLVY…IIDM).

It belongs to the cation transport ATPase (P-type) (TC 3.A.3) family. Type IA subfamily. As to quaternary structure, the system is composed of three essential subunits: KdpA, KdpB and KdpC.

It localises to the cell inner membrane. It catalyses the reaction K(+)(out) + ATP + H2O = K(+)(in) + ADP + phosphate + H(+). In terms of biological role, part of the high-affinity ATP-driven potassium transport (or Kdp) system, which catalyzes the hydrolysis of ATP coupled with the electrogenic transport of potassium into the cytoplasm. This subunit is responsible for energy coupling to the transport system and for the release of the potassium ions to the cytoplasm. The chain is Potassium-transporting ATPase ATP-binding subunit from Mesorhizobium japonicum (strain LMG 29417 / CECT 9101 / MAFF 303099) (Mesorhizobium loti (strain MAFF 303099)).